The primary structure comprises 495 residues: Ectonucleoside triphosphate diphosphohydrolase 2 (495 aa).

The Cytoplasmic segment spans residues 1–4 (MAGK). The chain crosses the membrane as a helical span at residues 5-25 (LVSLVPPLLLAAVGLAGLLLL). At 26–462 (CVPTQDVREP…PGLRKGTHFS (437 aa)) the chain is on the extracellular side. Asn64 carries an N-linked (GlcNAc...) asparagine glycan. The cysteines at positions 75 and 99 are disulfide-linked. N-linked (GlcNAc...) asparagine glycosylation is present at Asn129. Glu165 serves as the catalytic Proton acceptor. 204-208 (GASTQ) serves as a coordination point for ATP. Intrachain disulfides connect Cys242/Cys284 and Cys265/Cys310. N-linked (GlcNAc...) asparagine glycans are attached at residues Asn294 and Asn319. 2 disulfides stabilise this stretch: Cys323/Cys328 and Cys377/Cys399. 2 N-linked (GlcNAc...) asparagine glycosylation sites follow: Asn378 and Asn443. Residues 463–483 (SWVALLLLFTVLILAALVLLL) form a helical membrane-spanning segment. Residues 484-495 (RQVRSAKSPGAL) lie on the Cytoplasmic side of the membrane.

Belongs to the GDA1/CD39 NTPase family. The cofactor is Ca(2+). Requires Mg(2+) as cofactor.

It is found in the cell membrane. In the nervous system, could hydrolyze ATP and other nucleotides to regulate purinergic neurotransmission. Hydrolyzes ADP only to a marginal extent. The polypeptide is Ectonucleoside triphosphate diphosphohydrolase 2 (Entpd2) (Mus musculus (Mouse)).